The chain runs to 921 residues: Probable dipeptidyl-aminopeptidase B (921 aa).

Disordered stretches follow at residues 1 to 33 (MAGH…TAST) and 45 to 66 (VAAN…RGER). At 1–109 (MAGHPEENAQ…NKSVDKKLRR (109 aa)) the chain is on the cytoplasmic side. Residues 10-22 (QLLSTEQESMSRN) are compositionally biased toward polar residues. Low complexity predominate over residues 23 to 33 (SSDSVASTAST). The chain crosses the membrane as a helical; Signal-anchor for type II membrane protein span at residues 110-130 (LIWIIGGVFIGAWVLALFIFL). Residues 131-921 (GKQAYKHSSE…VPLEIDAAKV (791 aa)) lie on the Vacuolar side of the membrane. The tract at residues 138 to 157 (SSESPHDPQATSSRGSGKKV) is disordered. The N-linked (GlcNAc...) asparagine glycan is linked to asparagine 362. Serine 768 serves as the catalytic Charge relay system. Residue asparagine 822 is glycosylated (N-linked (GlcNAc...) asparagine). Residues aspartate 845 and histidine 878 each act as charge relay system in the active site.

Belongs to the peptidase S9B family.

Its subcellular location is the vacuole membrane. It carries out the reaction Release of an N-terminal dipeptide, Xaa-Yaa-|-Zaa-, from a polypeptide, preferentially when Yaa is Pro, provided Zaa is neither Pro nor hydroxyproline.. Type IV dipeptidyl-peptidase which removes N-terminal dipeptides sequentially from polypeptides having unsubstituted N-termini provided that the penultimate residue is proline. The polypeptide is Probable dipeptidyl-aminopeptidase B (dapB) (Botryotinia fuckeliana (strain B05.10) (Noble rot fungus)).